The chain runs to 157 residues: 2-C-methyl-D-erythritol 2,4-cyclodiphosphate synthase (157 aa).

Residues Asp8, His10, and His42 each coordinate a divalent metal cation. Residue 8-10 (DVH) coordinates 4-CDP-2-C-methyl-D-erythritol 2-phosphate. Residues 56-58 (DIG), 132-135 (STSE), Phe139, and Arg142 contribute to the 4-CDP-2-C-methyl-D-erythritol 2-phosphate site.

This sequence belongs to the IspF family. As to quaternary structure, homotrimer. The cofactor is a divalent metal cation.

The enzyme catalyses 4-CDP-2-C-methyl-D-erythritol 2-phosphate = 2-C-methyl-D-erythritol 2,4-cyclic diphosphate + CMP. It functions in the pathway isoprenoid biosynthesis; isopentenyl diphosphate biosynthesis via DXP pathway; isopentenyl diphosphate from 1-deoxy-D-xylulose 5-phosphate: step 4/6. In terms of biological role, involved in the biosynthesis of isopentenyl diphosphate (IPP) and dimethylallyl diphosphate (DMAPP), two major building blocks of isoprenoid compounds. Catalyzes the conversion of 4-diphosphocytidyl-2-C-methyl-D-erythritol 2-phosphate (CDP-ME2P) to 2-C-methyl-D-erythritol 2,4-cyclodiphosphate (ME-CPP) with a corresponding release of cytidine 5-monophosphate (CMP). The chain is 2-C-methyl-D-erythritol 2,4-cyclodiphosphate synthase from Dehalococcoides mccartyi (strain ATCC BAA-2266 / KCTC 15142 / 195) (Dehalococcoides ethenogenes (strain 195)).